Consider the following 331-residue polypeptide: E3 ubiquitin-protein ligase Siah2 (331 aa).

A disordered region spans residues 1–26 (MSRPSSAGGAAGGLGAGKAGGSKHGG). A compositionally biased stretch (gly residues) spans 9–26 (GAAGGLGAGKAGGSKHGG). An RING-type zinc finger spans residues 89–124 (CPVCFDYVLPPILQCQAGHLVCNQCRQKLSCCPTCR). The interval 139–331 (VASTLPFPCK…LGINVTISMC (193 aa)) is SBD. The SIAH-type zinc finger occupies 142–202 (TLPFPCKYSS…VMPHLMHAHK (61 aa)). Zn(2+) is bound by residues cysteine 147, cysteine 154, histidine 166, cysteine 170, cysteine 177, cysteine 184, histidine 196, and histidine 201.

The protein belongs to the SINA (Seven in absentia) family. In terms of assembly, homodimer. In terms of tissue distribution, in embryos it is expressed in all blastomeres starting at the mid-blastulla. After 20 somite stage, it is expressed mainly in the posterior part. Expressed in brain, including the eye, the cranial cavity, otic vesicle, optic chiasm and in the gut.

The enzyme catalyses S-ubiquitinyl-[E2 ubiquitin-conjugating enzyme]-L-cysteine + [acceptor protein]-L-lysine = [E2 ubiquitin-conjugating enzyme]-L-cysteine + N(6)-ubiquitinyl-[acceptor protein]-L-lysine.. It functions in the pathway protein modification; protein ubiquitination. In terms of biological role, E3 ubiquitin-protein ligase that mediates ubiquitination and subsequent proteasomal degradation of target proteins. E3 ubiquitin ligases accept ubiquitin from an E2 ubiquitin-conjugating enzyme in the form of a thioester and then directly transfers the ubiquitin to targeted substrates. It probably triggers the ubiquitin-mediated degradation of different substrates. Induces cellular growth arrest by inhibiting the G2/M transition. May play a role in the regulation of the cellular clock function. The protein is E3 ubiquitin-protein ligase Siah2 (siah2l) of Danio rerio (Zebrafish).